We begin with the raw amino-acid sequence, 379 residues long: Succinyl-diaminopimelate desuccinylase (379 aa).

His70 serves as a coordination point for Zn(2+). The active site involves Asp72. A Zn(2+)-binding site is contributed by Asp103. Glu137 serves as the catalytic Proton acceptor. Zn(2+) contacts are provided by Glu138, Glu166, and His352.

This sequence belongs to the peptidase M20A family. DapE subfamily. In terms of assembly, homodimer. The cofactor is Zn(2+). Co(2+) is required as a cofactor.

The enzyme catalyses N-succinyl-(2S,6S)-2,6-diaminopimelate + H2O = (2S,6S)-2,6-diaminopimelate + succinate. The protein operates within amino-acid biosynthesis; L-lysine biosynthesis via DAP pathway; LL-2,6-diaminopimelate from (S)-tetrahydrodipicolinate (succinylase route): step 3/3. Functionally, catalyzes the hydrolysis of N-succinyl-L,L-diaminopimelic acid (SDAP), forming succinate and LL-2,6-diaminopimelate (DAP), an intermediate involved in the bacterial biosynthesis of lysine and meso-diaminopimelic acid, an essential component of bacterial cell walls. This is Succinyl-diaminopimelate desuccinylase from Burkholderia lata (strain ATCC 17760 / DSM 23089 / LMG 22485 / NCIMB 9086 / R18194 / 383).